A 456-amino-acid chain; its full sequence is Enolase (456 aa).

Residue glutamine 169 participates in (2R)-2-phosphoglycerate binding. The active-site Proton donor is the glutamate 211. Aspartate 252, glutamate 314, and aspartate 341 together coordinate Mg(2+). Residues lysine 366, arginine 395, serine 396, and lysine 417 each contribute to the (2R)-2-phosphoglycerate site. The Proton acceptor role is filled by lysine 366.

The protein belongs to the enolase family. The cofactor is Mg(2+).

The protein resides in the cytoplasm. Its subcellular location is the secreted. It localises to the cell surface. The catalysed reaction is (2R)-2-phosphoglycerate = phosphoenolpyruvate + H2O. The protein operates within carbohydrate degradation; glycolysis; pyruvate from D-glyceraldehyde 3-phosphate: step 4/5. Its function is as follows. Catalyzes the reversible conversion of 2-phosphoglycerate (2-PG) into phosphoenolpyruvate (PEP). It is essential for the degradation of carbohydrates via glycolysis. The chain is Enolase from Metamycoplasma arthritidis (strain 158L3-1) (Mycoplasma arthritidis).